The following is a 264-amino-acid chain: 3-methyl-2-oxobutanoate hydroxymethyltransferase (264 aa).

Mg(2+) contacts are provided by D45 and D84. 3-methyl-2-oxobutanoate is bound by residues 45–46 (DS), D84, and K112. E114 contributes to the Mg(2+) binding site. E181 (proton acceptor) is an active-site residue.

Belongs to the PanB family. Homodecamer; pentamer of dimers. Mg(2+) serves as cofactor.

It is found in the cytoplasm. It catalyses the reaction 3-methyl-2-oxobutanoate + (6R)-5,10-methylene-5,6,7,8-tetrahydrofolate + H2O = 2-dehydropantoate + (6S)-5,6,7,8-tetrahydrofolate. Its pathway is cofactor biosynthesis; (R)-pantothenate biosynthesis; (R)-pantoate from 3-methyl-2-oxobutanoate: step 1/2. Catalyzes the reversible reaction in which hydroxymethyl group from 5,10-methylenetetrahydrofolate is transferred onto alpha-ketoisovalerate to form ketopantoate. This is 3-methyl-2-oxobutanoate hydroxymethyltransferase from Shewanella putrefaciens (strain CN-32 / ATCC BAA-453).